We begin with the raw amino-acid sequence, 332 residues long: Geranylgeranyl diphosphate synthase (332 aa).

Isopentenyl diphosphate-binding residues include Lys-45, Arg-48, and His-77. Mg(2+) is bound by residues Asp-84 and Asp-88. An an all-trans-polyprenyl diphosphate-binding site is contributed by Arg-93. Arg-94 contributes to the isopentenyl diphosphate binding site. Residues Lys-177, Thr-178, Gln-215, Lys-232, and Lys-242 each coordinate an all-trans-polyprenyl diphosphate.

It belongs to the FPP/GGPP synthase family. Mg(2+) serves as cofactor.

It carries out the reaction isopentenyl diphosphate + (2E,6E)-farnesyl diphosphate = (2E,6E,10E)-geranylgeranyl diphosphate + diphosphate. It functions in the pathway isoprenoid biosynthesis; geranylgeranyl diphosphate biosynthesis; geranylgeranyl diphosphate from farnesyl diphosphate and isopentenyl diphosphate: step 1/1. Functionally, catalyzes the condensation of isopentenyl pyrophosphate with the allylic pyrophosphates to yield geranylgeranyl diphosphate (GGPP) which is a precursor of the ether-linked lipids. The sequence is that of Geranylgeranyl diphosphate synthase (gds) from Saccharolobus solfataricus (strain ATCC 35092 / DSM 1617 / JCM 11322 / P2) (Sulfolobus solfataricus).